The primary structure comprises 658 residues: Protein translocase subunit SecA 3 (658 aa).

ATP contacts are provided by residues glutamine 111, 129–133 (GEGKT), and aspartate 536.

The protein belongs to the SecA family. In terms of assembly, monomer and homodimer. Part of the essential Sec protein translocation apparatus which comprises SecA, SecYEG and auxiliary proteins SecDF-YajC and YidC.

Its subcellular location is the cell inner membrane. The protein localises to the cytoplasm. It catalyses the reaction ATP + H2O + cellular proteinSide 1 = ADP + phosphate + cellular proteinSide 2.. Functionally, part of the Sec protein translocase complex. Interacts with the SecYEG preprotein conducting channel. Has a central role in coupling the hydrolysis of ATP to the transfer of proteins into and across the cell membrane, serving both as a receptor for the preprotein-SecB complex and as an ATP-driven molecular motor driving the stepwise translocation of polypeptide chains across the membrane. The chain is Protein translocase subunit SecA 3 from Magnetococcus marinus (strain ATCC BAA-1437 / JCM 17883 / MC-1).